Consider the following 258-residue polypeptide: Thiazole synthase (258 aa).

Residue Lys-98 is the Schiff-base intermediate with DXP of the active site. Residues Gly-159, 185–186, and 207–208 each bind 1-deoxy-D-xylulose 5-phosphate; these read AG and NT.

This sequence belongs to the ThiG family. As to quaternary structure, homotetramer. Forms heterodimers with either ThiH or ThiS.

The protein localises to the cytoplasm. The catalysed reaction is [ThiS sulfur-carrier protein]-C-terminal-Gly-aminoethanethioate + 2-iminoacetate + 1-deoxy-D-xylulose 5-phosphate = [ThiS sulfur-carrier protein]-C-terminal Gly-Gly + 2-[(2R,5Z)-2-carboxy-4-methylthiazol-5(2H)-ylidene]ethyl phosphate + 2 H2O + H(+). The protein operates within cofactor biosynthesis; thiamine diphosphate biosynthesis. Functionally, catalyzes the rearrangement of 1-deoxy-D-xylulose 5-phosphate (DXP) to produce the thiazole phosphate moiety of thiamine. Sulfur is provided by the thiocarboxylate moiety of the carrier protein ThiS. In vitro, sulfur can be provided by H(2)S. This chain is Thiazole synthase, found in Bacillus cereus (strain ZK / E33L).